A 406-amino-acid polypeptide reads, in one-letter code: DNA repair protein rad60 (406 aa).

Interacts with rfp1 and smc5. In terms of processing, phosphorylated by cds1.

It is found in the nucleus. In terms of biological role, required for repair of DNA double strand breaks which occur during replication, or induced by UV or gamma radiation, via recombination between sister chromatids. This has a subsequent role in the maintenance of chromosome structure. May work in conjunction with the Smc5-Smc6 complex. In Schizosaccharomyces pombe (strain 972 / ATCC 24843) (Fission yeast), this protein is DNA repair protein rad60 (rad60).